A 214-amino-acid polypeptide reads, in one-letter code: ER lumen protein-retaining receptor 3 (214 aa).

Residues 1–4 (MNVF) lie on the Lumenal side of the membrane. The chain crosses the membrane as a helical span at residues 5-24 (RISGDVSHLLAIIILLLKMW). At 25–32 (KSKSCAGI) the chain is on the cytoplasmic side. The helical transmembrane segment at 33 to 52 (SGKSQLLFALVFTTRYLDLF) threads the bilayer. The segment at 47-48 (RY) is interaction with the K-D-E-L motif on target proteins. At 53-58 (TVFISA) the chain is on the lumenal side. A helical membrane pass occupies residues 59–79 (YNTVMKIVFLVCAYVTVYLIY). The Cytoplasmic portion of the chain corresponds to 80–92 (GKFRKAYDSENDT). A helical transmembrane segment spans residues 93-110 (FRLEFLLVPVIGLSFLEN). Residues 111–116 (YEFTPL) lie on the Lumenal side of the membrane. Residues 117–135 (EILWTFSIYLESVAILPQL) form a helical membrane-spanning segment. At 136-149 (FMISKTGEAESITT) the chain is on the cytoplasmic side. A helical membrane pass occupies residues 150–168 (HYLFFLGLYRVLYLANWIW). Positions 159–169 (RVLYLANWIWR) are interaction with the K-D-E-L motif on target proteins. The Lumenal portion of the chain corresponds to 169–178 (RYHTEKFYDQ). Residues 179 to 199 (IAVVSGVVQTIFYFDFFYLYI) form a helical membrane-spanning segment. Residues 200–214 (TKVLKGKKLSLPMPV) lie on the Cytoplasmic side of the membrane. The tract at residues 204-207 (KGKK) is important for recycling of cargo proteins with the sequence motif K-D-E-L from the Golgi to the endoplasmic reticulum.

The protein belongs to the ERD2 family.

The protein resides in the endoplasmic reticulum membrane. It localises to the golgi apparatus membrane. The protein localises to the cytoplasmic vesicle. It is found in the COPI-coated vesicle membrane. Its function is as follows. Receptor for the C-terminal sequence motif K-D-E-L that is present on endoplasmic reticulum resident proteins and that mediates their recycling from the Golgi back to the endoplasmic reticulum. This Xenopus tropicalis (Western clawed frog) protein is ER lumen protein-retaining receptor 3 (kdelr3).